The primary structure comprises 462 residues: Bifunctional dihydrofolate reductase-thymidylate synthase (462 aa).

In terms of domain architecture, DHFR spans 6 to 165 (TFSMVLAMTL…INYDYQHLIN (160 aa)). Val-10 provides a ligand contact to substrate. NADP(+) contacts are provided by residues Ala-12 and 18 to 24 (GIGYQNR). Asp-32 contributes to the substrate binding site. NADP(+) contacts are provided by residues 49–51 (RKT) and 68–71 (ISKN). A substrate-binding site is contributed by Ile-101. 102 to 109 (GGKRIFEE) contributes to the NADP(+) binding site. Substrate is bound at residue Thr-122. The segment at 180-462 (ENQYLDMITK…HDKIEMKMAV (283 aa)) is thymidylate synthase. Residue Arg-200 participates in dUMP binding. Cys-345 is an active-site residue. DUMP-binding positions include His-346, 364–368 (QRSCD), Asn-376, and 406–408 (HIY).

It in the N-terminal section; belongs to the dihydrofolate reductase family. This sequence in the C-terminal section; belongs to the thymidylate synthase family.

The enzyme catalyses (6S)-5,6,7,8-tetrahydrofolate + NADP(+) = 7,8-dihydrofolate + NADPH + H(+). The catalysed reaction is dUMP + (6R)-5,10-methylene-5,6,7,8-tetrahydrofolate = 7,8-dihydrofolate + dTMP. Its pathway is cofactor biosynthesis; tetrahydrofolate biosynthesis; 5,6,7,8-tetrahydrofolate from 7,8-dihydrofolate: step 1/1. Bifunctional enzyme. Involved in de novo dTMP biosynthesis. Key enzyme in folate metabolism. Catalyzes an essential reaction for de novo glycine and purine synthesis, DNA precursor synthesis, and for the conversion of dUMP to dTMP. The polypeptide is Bifunctional dihydrofolate reductase-thymidylate synthase (Paramecium tetraurelia).